The following is a 229-amino-acid chain: ATP synthase subunit a (229 aa).

The next 6 membrane-spanning stretches (helical) occupy residues 16–36 (YAHV…GAAA), 81–101 (YIPF…LGMI), 110–130 (NMNT…FQGV), 142–162 (FMGP…VSHI), 175–195 (VMMG…IGVP), and 196–216 (IPFY…FTLL).

It belongs to the ATPase A chain family. F-type ATPases have 2 components, CF(1) - the catalytic core - and CF(0) - the membrane proton channel. CF(1) has five subunits: alpha(3), beta(3), gamma(1), delta(1), epsilon(1). CF(0) has three main subunits: a(1), b(2) and c(9-12). The alpha and beta chains form an alternating ring which encloses part of the gamma chain. CF(1) is attached to CF(0) by a central stalk formed by the gamma and epsilon chains, while a peripheral stalk is formed by the delta and b chains.

The protein localises to the cell inner membrane. Its function is as follows. Key component of the proton channel; it plays a direct role in the translocation of protons across the membrane. This is ATP synthase subunit a from Bdellovibrio bacteriovorus (strain ATCC 15356 / DSM 50701 / NCIMB 9529 / HD100).